We begin with the raw amino-acid sequence, 824 residues long: Probable acyl-CoA dehydrogenase IBR3 (824 aa).

At Gly-2 the chain carries N-acetylglycine. Residues 555–565 (FAMTEPQVASS), 589–591 (WTS), Arg-706, Gln-776, and 776–780 (QVHGA) contribute to the FAD site. The Microbody targeting signal signature appears at 822 to 824 (SKL).

The protein belongs to the acyl-CoA dehydrogenase family. FAD is required as a cofactor.

The protein resides in the peroxisome. It carries out the reaction a 2,3-saturated acyl-CoA + A = a 2,3-dehydroacyl-CoA + AH2. In terms of biological role, involved with IBR1 and IBR10 in the peroxisomal beta-oxidation of indole-3-butyric acid (IBA) to form indole-3-acetic acid (IAA), a biologically active auxin. May be responsible for catalyzing the first step in IBA-CoA beta-oxidation. May play a role in defense response to pathogenic bacteria. The sequence is that of Probable acyl-CoA dehydrogenase IBR3 from Arabidopsis thaliana (Mouse-ear cress).